The following is a 257-amino-acid chain: uncharacterized protein (257 aa).

The N-terminal stretch at 1–22 (MIHSKRLRLWLYLVLLAVFIGA) is a signal peptide. The N-palmitoyl cysteine moiety is linked to residue Cys23. Cys23 is lipidated: S-diacylglycerol cysteine.

The protein belongs to the staphylococcal tandem lipoprotein family.

The protein localises to the cell membrane. This is an uncharacterized protein from Staphylococcus aureus (strain NCTC 8325 / PS 47).